Here is a 1059-residue protein sequence, read N- to C-terminus: Zinc finger protein 628 (1059 aa).

6 C2H2-type zinc fingers span residues 36–58, 64–86, 92–114, 120–142, 148–170, and 176–198; these read YECGECGKSFRWSSRLLHHQRTH, YKCPDCPKAFKGSSALLYHQRGH, YQCPDCPKAFKRSSLLQIHRSVH, FICGQCGLAFKWSSHYQYHLRQH, YPCPDCPKAFKNSSSLRRHRHVH, and YTCGVCGKSFTQSTNLRQHQRVH. Thr-199 carries the post-translational modification Phosphothreonine. The C2H2-type 7 zinc-finger motif lies at 204 to 226; that stretch reads FRCPLCPKTFTHSSNLLLHQRTH. Disordered regions lie at residues 226–247, 260–280, and 312–351; these read HGAAPAPGTASAAPPPQSREPG, LQPHSPPAPPAPPPPPPPVVP, and EHQPCPGPDAAPQPQEAPAEAPKADQPPSPLPQPPPPAAA. The span at 228–237 shows a compositional bias: low complexity; that stretch reads AAPAPGTASA. The segment covering 263 to 279 has biased composition (pro residues); it reads HSPPAPPAPPPPPPPVV. Positions 323–335 are enriched in low complexity; that stretch reads PQPQEAPAEAPKA. Pro residues predominate over residues 336–351; that stretch reads DQPPSPLPQPPPPAAA. 7 consecutive C2H2-type zinc fingers follow at residues 356–378, 386–408, 454–476, 482–504, 510–532, 538–560, and 566–588; these read FACLPCGKSFRTVAGLSRHQHSH, FRCGSCDGSFPQLASLLAHQQCH, YKCAECGKSFKGSSGLRYHLRDH, YQCGECGKAFKRSSLLAIHQRVH, FTCGQCGLTFKWSSHYQYHLRLH, YACGECGKAFRNTSCLRRHRHVH, and HACGVCGKSFAQTSNLRQHQRVH. Thr-589 is modified (phosphothreonine). 2 C2H2-type zinc fingers span residues 594-616 and 622-644; these read FRCPLCPKTFTHSSNLLLHQRTH and FTCPICGRGFVMAAYLQRHLRTH. The segment covering 644-658 has biased composition (low complexity); the sequence is HAPANTPPSTTAPAA. Residues 644-674 are disordered; the sequence is HAPANTPPSTTAPAAGPQPPAPLAAARAPPA. 4 repeat units span residues 818-831, 832-842, 843-853, and 854-864. Positions 818–864 are 4 X approximate tandem repeats; sequence VQLQPLRPAPEVTTVQLQPAQEVTTVQLQPAQEVTTVQLQPAQEVTT. The tract at residues 943 to 1059 is interaction with TAF4B; that stretch reads DGEQTRLCVQ…LPAVQLVHTF (117 aa).

In terms of assembly, interacts with TAF4B.

The protein localises to the nucleus. In terms of biological role, transcriptional activator. Binds DNA on GT-box consensus sequence 5'-TTGGTT-3'. Plays a role in spermiogenesis. The protein is Zinc finger protein 628 (ZNF628) of Homo sapiens (Human).